A 107-amino-acid polypeptide reads, in one-letter code: uncharacterized protein (107 aa).

This is an uncharacterized protein from Methanocaldococcus jannaschii (strain ATCC 43067 / DSM 2661 / JAL-1 / JCM 10045 / NBRC 100440) (Methanococcus jannaschii).